Reading from the N-terminus, the 239-residue chain is Pre-mRNA-splicing factor isy1 (239 aa).

This sequence belongs to the ISY1 family. Associated with the spliceosome.

It localises to the cytoplasm. Its subcellular location is the nucleus. Involved in pre-mRNA splicing. The sequence is that of Pre-mRNA-splicing factor isy1 (msp-7) from Neurospora crassa (strain ATCC 24698 / 74-OR23-1A / CBS 708.71 / DSM 1257 / FGSC 987).